We begin with the raw amino-acid sequence, 109 residues long: Cyclic di-AMP receptor A (109 aa).

3',3'-c-di-AMP is bound by residues T21, F25, T28, G35, F36, L37, N41, G47, E92, and G94.

Homotrimer.

It localises to the cytoplasm. Binds cyclic di-AMP (c-di-AMP) and is probably involved in c-di-AMP-mediated signaling pathways. In vitro, can also bind cyclic GMP-AMP (3'3'-cGAMP), with lower affinity, but not c-di-GMP or 2'3'-cGAMP. This chain is Cyclic di-AMP receptor A, found in Bacillus subtilis (strain 168).